The sequence spans 408 residues: Glutamate N-acetyltransferase (408 aa).

Positions 150, 176, 189, 271, 403, and 408 each coordinate substrate. The active-site Nucleophile is T189.

It belongs to the ArgJ family. In terms of assembly, heterotetramer of two alpha and two beta chains.

Its subcellular location is the cytoplasm. The catalysed reaction is N(2)-acetyl-L-ornithine + L-glutamate = N-acetyl-L-glutamate + L-ornithine. It functions in the pathway amino-acid biosynthesis; L-arginine biosynthesis; L-ornithine and N-acetyl-L-glutamate from L-glutamate and N(2)-acetyl-L-ornithine (cyclic): step 1/1. Catalyzes the transfer of the acetyl group from N(2)-acetylornithine to glutamate, forming N-acetylglutamate and L-ornithine. The sequence is that of Glutamate N-acetyltransferase from Methanococcus vannielii (strain ATCC 35089 / DSM 1224 / JCM 13029 / OCM 148 / SB).